The sequence spans 210 residues: UPF0301 protein M446_6268 (210 aa).

It belongs to the UPF0301 (AlgH) family.

This is UPF0301 protein M446_6268 from Methylobacterium sp. (strain 4-46).